A 381-amino-acid chain; its full sequence is GDP-mannose transporter (381 aa).

The Cytoplasmic portion of the chain corresponds to 1–44 (MAEGKKTDDYTIQMDSIDQGNKSFEAPPPPQPRSPPSGSLSNNP). The interval 19 to 41 (QGNKSFEAPPPPQPRSPPSGSLS) is disordered. Pro residues predominate over residues 26 to 35 (APPPPQPRSP). Residues 45–65 (ILPVLAYCGSSILMTVMNKYV) traverse the membrane as a helical segment. The Lumenal portion of the chain corresponds to 66–70 (LSGTD). A helical transmembrane segment spans residues 71–91 (FNLNFFLLCIQSLVCIIAIQT). At 92–109 (CKSCGLITYRDFSADEAR) the chain is on the cytoplasmic side. The helical transmembrane segment at 110-126 (KWFPITLLLIGMIYTGS) threads the bilayer. The Lumenal portion of the chain corresponds to 127–133 (KALQFLS). The chain crosses the membrane as a helical span at residues 134-150 (IPVYTIFKNLTIILIAY). At 151–159 (GEVLWFGGS) the chain is on the cytoplasmic side. The helical transmembrane segment at 160–181 (VTGLTLFSFGLMVLSSIIAAWA) threads the bilayer. Residues 182-199 (DIKHAVESNGDATAKVST) lie on the Lumenal side of the membrane. Residues 200–220 (LNAGYIWMLVNCLCTSSYVLG) traverse the membrane as a helical segment. Topologically, residues 221-234 (MRKRIKLTNFKDFD) are cytoplasmic. Residues 235–255 (TMFYNNLLSIPVLIVLSAFLE) form a helical membrane-spanning segment. The Lumenal segment spans residues 256–273 (DWSSTNVNRNFPPMDRNS). A helical transmembrane segment spans residues 274–294 (IVFAMILSGLSSVFISYTSAW). Topologically, residues 295 to 302 (CVRVTSST) are cytoplasmic. Residues 303-323 (TYSMVGALNKLPIAISGLIFF) traverse the membrane as a helical segment. Topologically, residues 324 to 326 (DAP) are lumenal. A helical membrane pass occupies residues 327-347 (VTFPSVSAIVVGFVSGIVYAV). The Cytoplasmic portion of the chain corresponds to 348–381 (AKIKQNAKPRTGVLPTANPPVSASSQSMRDSLRS). Residues 358–381 (TGVLPTANPPVSASSQSMRDSLRS) are disordered. Positions 366 to 381 (PPVSASSQSMRDSLRS) are enriched in polar residues.

This sequence belongs to the TPT transporter family. SLC35D subfamily. As to quaternary structure, homooligomer.

The protein resides in the golgi apparatus membrane. It localises to the cytoplasmic vesicle membrane. The protein localises to the endoplasmic reticulum membrane. In terms of biological role, involved in the import of GDP-mannose from the cytoplasm into the Golgi lumen. The sequence is that of GDP-mannose transporter (gmt1) from Aspergillus niger (strain ATCC MYA-4892 / CBS 513.88 / FGSC A1513).